A 468-amino-acid chain; its full sequence is Putative magnesium transporter MRS2-G (468 aa).

2 disordered regions span residues Met1–Val76 and Gly183–Arg204. Low complexity-rich tracts occupy residues Ala14–Thr23 and Arg31–Ser45. Pro residues predominate over residues Pro46–Ala67. Residues Gly187–Gln201 are compositionally biased toward basic and acidic residues. 2 consecutive transmembrane segments (helical) span residues Leu402 to Ala422 and Phe437 to Leu457.

It belongs to the CorA metal ion transporter (MIT) (TC 1.A.35.5) family. In terms of assembly, interacts with CYCB2-2.

The protein resides in the membrane. Functionally, putative magnesium transporter. This Oryza sativa subsp. japonica (Rice) protein is Putative magnesium transporter MRS2-G (MRS2-G).